Here is an 88-residue protein sequence, read N- to C-terminus: UPF0298 protein BC_3932 (88 aa).

The protein belongs to the UPF0298 family.

The protein resides in the cytoplasm. The sequence is that of UPF0298 protein BC_3932 from Bacillus cereus (strain ATCC 14579 / DSM 31 / CCUG 7414 / JCM 2152 / NBRC 15305 / NCIMB 9373 / NCTC 2599 / NRRL B-3711).